Consider the following 111-residue polypeptide: Photosystem II reaction center Psb28 protein (111 aa).

It belongs to the Psb28 family. In terms of assembly, part of the photosystem II complex.

It localises to the cellular thylakoid membrane. The polypeptide is Photosystem II reaction center Psb28 protein (Gloeothece citriformis (strain PCC 7424) (Cyanothece sp. (strain PCC 7424))).